Consider the following 59-residue polypeptide: Phycobilisome degradation protein NblA (59 aa).

The protein to chloroplast ycf18.

Its function is as follows. Involved in phycobilisome (PBS) degradation during nutrient deprivation. May mark the PBS for degradation by covalent association with PBS components or may disrupt the PBS via ionic interactions. The polypeptide is Phycobilisome degradation protein NblA (Synechococcus elongatus (strain ATCC 33912 / PCC 7942 / FACHB-805) (Anacystis nidulans R2)).